The primary structure comprises 365 residues: MPLSHRQTLTRYLIEERRRFPEASGELNALILDVALACKALARVVSFGELGDALSDGSAAPTGGGINVQGEVQKPLDVQSNEMFIRMNEWNGQLAGMASEEMEEPYLIPSSYPRGKYLLVFDPLDGSSNIDVNVSIGSIFSILRAPADVVASGRDVTEADFLQPGAAQVAAGYTIYGPTTQLVLTVGNGVAAFTLDPNLGEFLLTRSDIRVPEQTQEFAINSSNSRFWEPPVKRYVDECLAGKTGPRGKDFNMRWVASMVAEAHRILMRGGVFMYPRDTKDPAKPGRLRLLYEANPVAMLMEQAGGRASTGREPILGVSPTALHQRIGLIFGSKDEVERIERYHQEPASNEAAAPLFAERSLFRD.

Positions 100, 122, 124, and 125 each coordinate Mg(2+). Substrate-binding positions include 125-128 (DGSS) and asparagine 221. Glutamate 293 contacts Mg(2+).

The protein belongs to the FBPase class 1 family. Homotetramer. Mg(2+) serves as cofactor.

Its subcellular location is the cytoplasm. It catalyses the reaction beta-D-fructose 1,6-bisphosphate + H2O = beta-D-fructose 6-phosphate + phosphate. The protein operates within carbohydrate biosynthesis; gluconeogenesis. In Cupriavidus metallidurans (strain ATCC 43123 / DSM 2839 / NBRC 102507 / CH34) (Ralstonia metallidurans), this protein is Fructose-1,6-bisphosphatase class 1 2.